The following is a 98-amino-acid chain: Acylphosphatase-1 (98 aa).

Residues 8–98 (SVDYEVFGKV…LEHSTFSICK (91 aa)) form the Acylphosphatase-like domain. Residues Arg23 and Asn41 contribute to the active site.

The protein belongs to the acylphosphatase family.

The catalysed reaction is an acyl phosphate + H2O = a carboxylate + phosphate + H(+). The protein is Acylphosphatase-1 (acyp1) of Xenopus tropicalis (Western clawed frog).